The sequence spans 635 residues: Threonine--tRNA ligase (635 aa).

In terms of domain architecture, TGS spans 1–61 (MIAITLPDGS…DRDAELAIVT (61 aa)). The catalytic stretch occupies residues 242–533 (DHRKLGKTLD…LLENHAGALP (292 aa)). The Zn(2+) site is built by Cys333, His384, and His510.

Belongs to the class-II aminoacyl-tRNA synthetase family. As to quaternary structure, homodimer. Zn(2+) is required as a cofactor.

Its subcellular location is the cytoplasm. The enzyme catalyses tRNA(Thr) + L-threonine + ATP = L-threonyl-tRNA(Thr) + AMP + diphosphate + H(+). In terms of biological role, catalyzes the attachment of threonine to tRNA(Thr) in a two-step reaction: L-threonine is first activated by ATP to form Thr-AMP and then transferred to the acceptor end of tRNA(Thr). Also edits incorrectly charged L-seryl-tRNA(Thr). This chain is Threonine--tRNA ligase, found in Cupriavidus necator (strain ATCC 17699 / DSM 428 / KCTC 22496 / NCIMB 10442 / H16 / Stanier 337) (Ralstonia eutropha).